Here is a 191-residue protein sequence, read N- to C-terminus: Fe/S biogenesis protein NfuA (191 aa).

[4Fe-4S] cluster-binding residues include Cys-149 and Cys-152.

The protein belongs to the NfuA family. Homodimer. [4Fe-4S] cluster is required as a cofactor.

In terms of biological role, involved in iron-sulfur cluster biogenesis. Binds a 4Fe-4S cluster, can transfer this cluster to apoproteins, and thereby intervenes in the maturation of Fe/S proteins. Could also act as a scaffold/chaperone for damaged Fe/S proteins. The polypeptide is Fe/S biogenesis protein NfuA (Citrobacter koseri (strain ATCC BAA-895 / CDC 4225-83 / SGSC4696)).